Consider the following 362-residue polypeptide: Cytochrome P450 monooxygenase-like protein avaN (362 aa).

The chain crosses the membrane as a helical span at residues 3–23 (VILAIFIAAAGCLFSSWRIYW).

The protein belongs to the cytochrome P450 family.

It localises to the membrane. It functions in the pathway secondary metabolite biosynthesis. Cytochrome P450 monooxygenase-like protein; part of the cluster that mediates the biosynthesis of a highly modified cyclo-arginine-tryptophan dipeptide (cRW). The first step of the pathway is perfornmed by the arginine-containing cyclodipeptide synthase (RCPDS) avaA that acts as the scaffold-generating enzyme and is responsible for formation of the cyclo-Arg-Trp (cRW) diketopiperazine. AvaB then acts as a multifunctional flavoenzyme that is responsible for generating the cyclo-Arg-formylkynurenine DKP, which can be deformylated by avaC. AvaB then further catalyzes an additional N-oxidation followed by cyclization and dehydration. The next step is an N-acetylation of the guanidine group catalyzed by the arginine N-acetyltransferase avaD. The roles of the additional enzymes identified within the ava cluster still have to be determined. The polypeptide is Cytochrome P450 monooxygenase-like protein avaN (Aspergillus versicolor).